The following is a 600-amino-acid chain: MGTSEHVPLPTDEAKAKELEQSQHSEEPDRGQWTGKFDFLMSMVAYAVGLGNVWRFPYLCYKNGGGSFLVVYMIFFCLAAVPIFLMEVTVGQYLQKGAMEMWLMCPLFRGVGIGNVVIAFMCIAYFCVIVAWAMFYMISSIAWVFPWETCNNYWNDATCVTGKENFTELARIKALVASAGGHTQTSVEQFWEKRVLHDTGDISEFGGIQWELFFIMAAAWLIVYFALWKGITQARKFVYFCALFPYVLIFILLIRGLTLEGAGTGIYFYLKPNATRLLDTAVWKDAGTQVFYSYGVGFGALIALGSHNKFNHNCFKDAITMCFINGCTSITAGFAVFSILGYMSHVAQKDISEIVKPGVGLAFLAYPEVASNLPMKQVFAVLFFLMITILGLDSQVCMMEGLFTALEDAFPILRKYKKQSLGIFCLFFFCIGIPMVTHSGSHWLTLFDAYGASGYALLFVVFFEVVGLAYGFGAHNIRKALHEMIGVTLPKGIEYVWKFCAPATSLVLFVFCVVYYHPVKYPDGKDFPFWANAFGWFLSSCSMVVIPGYAIYYLFFTNKHLTLKERVRKGLNLDGSFESPAKKNLVNNAEELKFIESSSQ.

Residues 1–31 are disordered; the sequence is MGTSEHVPLPTDEAKAKELEQSQHSEEPDRG. Topologically, residues 1-38 are cytoplasmic; the sequence is MGTSEHVPLPTDEAKAKELEQSQHSEEPDRGQWTGKFD. The span at 12 to 30 shows a compositional bias: basic and acidic residues; the sequence is DEAKAKELEQSQHSEEPDR. The next 3 membrane-spanning stretches (helical) occupy residues 39 to 59, 68 to 88, and 116 to 136; these read FLMSMVAYAVGLGNVWRFPYL, FLVVYMIFFCLAAVPIFLMEV, and VVIAFMCIAYFCVIVAWAMFY. Residues 137-207 are Extracellular-facing; it reads MISSIAWVFP…DTGDISEFGG (71 aa). An N-linked (GlcNAc...) asparagine glycan is attached at Asn-165. The next 2 helical transmembrane spans lie at 208-228 and 237-257; these read IQWELFFIMAAAWLIVYFALW and FVYFCALFPYVLIFILLIRGL. Asn-273 is a glycosylation site (N-linked (GlcNAc...) asparagine). Helical transmembrane passes span 286 to 306, 321 to 341, 378 to 398, 420 to 440, 454 to 474, 499 to 519, and 536 to 556; these read AGTQVFYSYGVGFGALIALGS, MCFINGCTSITAGFAVFSILG, VFAVLFFLMITILGLDSQVCM, SLGIFCLFFFCIGIPMVTHSG, GYALLFVVFFEVVGLAYGFGA, FCAPATSLVLFVFCVVYYHPV, and WFLSSCSMVVIPGYAIYYLFF. Topologically, residues 557-600 are cytoplasmic; it reads TNKHLTLKERVRKGLNLDGSFESPAKKNLVNNAEELKFIESSSQ.

This sequence belongs to the sodium:neurotransmitter symporter (SNF) family. Highly expressed in the head, the excretory canal, tail hypodermal cells, epidermis and vulval epithelial cells. Expressed in the excretory canal-associated neuron and in some non-amphidial sensory neurons in the head (at protein level).

Its subcellular location is the cell membrane. In terms of biological role, betaine transporter dependent on Na(+) and Cl(-) ions that functions primarily in the epidermis to clear betaine from the extracellular space. Elicits current in response to betaine but not in response to GABA, L-carnitine, sarcosine, glycine or dimethylglycine. This Caenorhabditis elegans protein is Sodium- and chloride-dependent betaine transporter.